The sequence spans 488 residues: Gamma-aminobutyric acid receptor subunit beta-4 (488 aa).

The first 25 residues, 1 to 25 (MWTFQADRLSGIVSALAALCVACCA), serve as a signal peptide directing secretion. Residues 26–244 (QSPSTGNISV…SFRIKRNIGY (219 aa)) lie on the Extracellular side of the membrane. N-linked (GlcNAc...) asparagine glycans are attached at residues Asn32, Asn104, Asn173, and Asn195. An intrachain disulfide couples Cys160 to Cys174. The next 3 helical transmembrane spans lie at 245-266 (FILQ…SFWI), 271-292 (SAAR…NTHL), and 304-326 (AIDV…YAFV). Residues 327–465 (NYIFFGRGPR…DLTDVSTIDK (139 aa)) are Cytoplasmic-facing. Residues 466 to 487 (WSRIIFPITFGFFNLVYWLYYV) traverse the membrane as a helical segment.

It belongs to the ligand-gated ion channel (TC 1.A.9) family. Gamma-aminobutyric acid receptor (TC 1.A.9.5) subfamily. GABRB4 sub-subfamily. As to quaternary structure, generally pentameric. There are five types of GABA(A) receptor chains: alpha, beta, gamma, delta, and rho.

It is found in the postsynaptic cell membrane. The protein resides in the cell membrane. GABA, the major inhibitory neurotransmitter in the vertebrate brain, mediates neuronal inhibition by binding to the GABA/benzodiazepine receptor and opening an integral chloride channel. The sequence is that of Gamma-aminobutyric acid receptor subunit beta-4 (GABRB4) from Gallus gallus (Chicken).